We begin with the raw amino-acid sequence, 1007 residues long: uncharacterized protein (1007 aa).

The first 51 residues, 1 to 51, serve as a signal peptide directing secretion; that stretch reads MTTPISNSPSSIPTVTVSTTTASSGSLGTSTVSSTTTSTSVAQTATTTSSA. The segment covering 1 to 96 has biased composition (low complexity); that stretch reads MTTPISNSPS…SATANKTSSA (96 aa). Disordered regions lie at residues 1–186, 200–224, 387–533, 543–562, 578–645, 655–674, and 712–757; these read MTTP…GNPI, TYTTSPRNENIFSPGPEGLPNMSLP, NWGS…GPDI, TVYPGENGGSTEGPLPANQN, ETII…GPDI, and DLED…GPDI. Over residues 118–163 the composition is skewed to polar residues; the sequence is DGEVSSNYDDVDTPTNSSDSTVDSDYQDVETQYKTISNNGENTYET. Over residues 167-176 the composition is skewed to basic and acidic residues; it reads HGEKNTHVQE. Polar residues-rich tracts occupy residues 177-186 and 200-210; these read SHASGTGNPI and TYTTSPRNENI. Residues 423 to 442 are compositionally biased toward low complexity; sequence VINVNVNVGGTNVNIGDTNV. The segment covering 443 to 453 has biased composition (polar residues); that stretch reads SKGSGTPTSSQ. The span at 469–491 shows a compositional bias: low complexity; that stretch reads IDTNNQTNGDINTNDNSNNVDGS. The segment covering 507-523 has biased composition (polar residues); that stretch reads DTESTNGNDSGKTTSTE. A compositionally biased stretch (acidic residues) spans 597–618; that stretch reads ADADVEDTSDTDSGIGDDDGVS. The segment covering 619 to 635 has biased composition (low complexity); sequence DTESTNGNNSGKTTSTE. Over residues 712-730 the composition is skewed to acidic residues; the sequence is DLEDVSDADSGFGDDDGIS. Over residues 732 to 743 the composition is skewed to polar residues; sequence TESTNGNDSGKN.

Belongs to the chlamydial CPn_0572/CT_456/TC_0741 family.

This is an uncharacterized protein from Chlamydia muridarum (strain MoPn / Nigg).